A 189-amino-acid polypeptide reads, in one-letter code: Putative manganese efflux pump MntP (189 aa).

6 helical membrane passes run 3 to 23 (PVSL…AAIG), 41 to 61 (IIFG…GQAA), 65 to 85 (VADW…LHMI), 106 to 128 (WILA…GLAF), 141 to 161 (GLAT…LGAV), and 168 to 188 (MVGG…HLSA).

Belongs to the MntP (TC 9.B.29) family.

The protein resides in the cell inner membrane. In terms of biological role, probably functions as a manganese efflux pump. The polypeptide is Putative manganese efflux pump MntP (Pseudomonas aeruginosa (strain LESB58)).